The sequence spans 20 residues: Unknown protein NF028 from 2D-PAGE (20 aa).

The sequence is that of Unknown protein NF028 from 2D-PAGE from Naegleria fowleri (Brain eating amoeba).